The primary structure comprises 424 residues: Insertion element IS2A uncharacterized 48.2 kDa protein (424 aa).

Residues 229–412 form the Integrase catalytic domain; it reads KPAVPPSKRA…SPREYLRHGA (184 aa).

It belongs to the transposase 8 family.

This chain is Insertion element IS2A uncharacterized 48.2 kDa protein, found in Escherichia coli.